Here is a 69-residue protein sequence, read N- to C-terminus: Large ribosomal subunit protein bL32c (69 aa).

Belongs to the bacterial ribosomal protein bL32 family.

It localises to the plastid. It is found in the chloroplast. The protein is Large ribosomal subunit protein bL32c (rpl32) of Marchantia polymorpha (Common liverwort).